Here is a 211-residue protein sequence, read N- to C-terminus: Transcriptional regulatory protein LiaR (211 aa).

One can recognise a Response regulatory domain in the interval 3–119; sequence RVLLIDDHEM…EIADAIRAAS (117 aa). A 4-aspartylphosphate modification is found at D54. Positions 143–208 constitute an HTH luxR-type domain; sequence NALPHESLTK…QAAVYAHRNH (66 aa). The H-T-H motif DNA-binding region spans 167–186; the sequence is NKEIGEELFITIKTVKTHIT.

Post-translationally, phosphorylated by LiaS.

The protein resides in the cytoplasm. Functionally, member of the two-component regulatory system LiaS/LiaR probably involved in response to a subset of cell wall-active antibiotics that interfere with the lipid II cycle in the cytoplasmic membrane (bacitracin, nisin, ramoplanin and vancomycin). Also seems to be involved in response to cationic antimicrobial peptides and secretion stress. LiaR regulates the transcription of the liaIHGFSR operon. The protein is Transcriptional regulatory protein LiaR (liaR) of Bacillus subtilis (strain 168).